The chain runs to 428 residues: Glutamate-1-semialdehyde 2,1-aminomutase (428 aa).

N6-(pyridoxal phosphate)lysine is present on K267.

This sequence belongs to the class-III pyridoxal-phosphate-dependent aminotransferase family. HemL subfamily. Homodimer. The cofactor is pyridoxal 5'-phosphate.

It is found in the cytoplasm. It carries out the reaction (S)-4-amino-5-oxopentanoate = 5-aminolevulinate. Its pathway is porphyrin-containing compound metabolism; protoporphyrin-IX biosynthesis; 5-aminolevulinate from L-glutamyl-tRNA(Glu): step 2/2. This is Glutamate-1-semialdehyde 2,1-aminomutase from Sulfurihydrogenibium sp. (strain YO3AOP1).